The primary structure comprises 201 residues: Large ribosomal subunit protein uL4 (201 aa).

The interval 43-71 (TRAQKTRSEVSGGGKKPWAQKGTGRARAG) is disordered.

It belongs to the universal ribosomal protein uL4 family. In terms of assembly, part of the 50S ribosomal subunit.

One of the primary rRNA binding proteins, this protein initially binds near the 5'-end of the 23S rRNA. It is important during the early stages of 50S assembly. It makes multiple contacts with different domains of the 23S rRNA in the assembled 50S subunit and ribosome. Its function is as follows. Forms part of the polypeptide exit tunnel. In Pseudoalteromonas translucida (strain TAC 125), this protein is Large ribosomal subunit protein uL4.